Consider the following 266-residue polypeptide: ATP synthase subunit a (266 aa).

Helical transmembrane passes span 28–48, 88–108, 141–161, 206–226, and 237–257; these read SINV…LVIF, LIAP…MMDL, DVNI…FYSI, LFGN…LLPW, and AIFH…LTVV.

It belongs to the ATPase A chain family. In terms of assembly, F-type ATPases have 2 components, CF(1) - the catalytic core - and CF(0) - the membrane proton channel. CF(1) has five subunits: alpha(3), beta(3), gamma(1), delta(1), epsilon(1). CF(0) has three main subunits: a(1), b(2) and c(9-12). The alpha and beta chains form an alternating ring which encloses part of the gamma chain. CF(1) is attached to CF(0) by a central stalk formed by the gamma and epsilon chains, while a peripheral stalk is formed by the delta and b chains.

It localises to the cell inner membrane. Its function is as follows. Key component of the proton channel; it plays a direct role in the translocation of protons across the membrane. The protein is ATP synthase subunit a of Pectobacterium atrosepticum (strain SCRI 1043 / ATCC BAA-672) (Erwinia carotovora subsp. atroseptica).